A 953-amino-acid chain; its full sequence is Atromentin synthetase invA2 (953 aa).

The tract at residues 38 to 460 (RAVSQYPNHE…SGRIKDTVIV (423 aa)) is adenylation (A) domain. The 79-residue stretch at 592–670 (APSTETEKTL…SLAKYVDSLI (79 aa)) folds into the Carrier domain. The thiolation and peptide carrier (T) domain stretch occupies residues 597–667 (TEKTLAGIYA…VISSLAKYVD (71 aa)). Ser-629 is subject to O-(pantetheine 4'-phosphoryl)serine. The tract at residues 693-795 (PIFMVHPGVG…FTGLINIPPH (103 aa)) is thioesterase (TE) domain.

The protein belongs to the ATP-dependent AMP-binding enzyme family.

It participates in secondary metabolite biosynthesis. An L-tyrosine:2-oxoglutarate aminotransferase (probably invD) and atromentin synthetase invA2 catalyze consecutive steps to turn over L-tyrosine into atromentin, which represents the generic precursor molecule for the entire terphenylquinone and pulvinic acid family of pigments, which are widely distributed secondary metabolites in homobasidiomycetes. The first step catalyzed by the aminotransferase converts L-tyrosine in to 4-hydroxyphenylpyruvate (4-HPP). Adenylation of two 4-HPP monomers by the invA2 adenylation (A) domain, covalent tethering of the monomers as a thioester and oxoester onto the invA2 thiolation (T) and thioesterase (TE) domains, respectively, and symmetric C-C-bond formation between two monomers catalyzed by the invA2 TE domain leads to atromentin. In Paxillus involutus (Naked brimcap), this protein is Atromentin synthetase invA2 (invA2).